Reading from the N-terminus, the 361-residue chain is Histidinol-phosphate aminotransferase (361 aa).

Lysine 223 carries the N6-(pyridoxal phosphate)lysine modification.

Belongs to the class-II pyridoxal-phosphate-dependent aminotransferase family. Histidinol-phosphate aminotransferase subfamily. As to quaternary structure, homodimer. Pyridoxal 5'-phosphate is required as a cofactor.

The catalysed reaction is L-histidinol phosphate + 2-oxoglutarate = 3-(imidazol-4-yl)-2-oxopropyl phosphate + L-glutamate. It participates in amino-acid biosynthesis; L-histidine biosynthesis; L-histidine from 5-phospho-alpha-D-ribose 1-diphosphate: step 7/9. This is Histidinol-phosphate aminotransferase from Deinococcus radiodurans (strain ATCC 13939 / DSM 20539 / JCM 16871 / CCUG 27074 / LMG 4051 / NBRC 15346 / NCIMB 9279 / VKM B-1422 / R1).